Reading from the N-terminus, the 839-residue chain is MAIGITACVLSLINYQGLAYSAALINEPIQACVIAREVDLTDDIRTKFAQCLGWQADQSSPVCLGFYKPIAVTPLASPDEVRILADTASFYRTQRSTLSGHVEMQQGQRVVNAQTAYVYRDPKTNEVTKIEFLNHVRYLEPDRMMIARKAVVYPQDKSGEVEDVLYRFNTNRSNALLPAWGRASLIKRFANQDYFLKEATYTTCAPQDKAWAIEAESISIDNEKGKGIARNAKLRIHEWPVLYTPYLSFPTNRDRKSGFLMPIVGYSNVGGADLGIPYYWNMAPNYDMTLVPHLYTKRGLMLGGQFRYLTSKSTGTFNGNFLPKDKAFGRFLQDNEVEFPQIRGLSTNRWEVNFVDSTQFLSDLQLNVNFQQVSDDYYLQDFSTNLASVTQRQLLRQADLTYTTENWTFRGMGQSYQTLHPINEIPVSPVYERLPQLMARGYYDDLPFNAQFNILGQYDQFHWPNDSWNIALNNMPQGPRFHLNPILSVPMMKPWGYVTPSVQFVENYYDISRNYTWGTSRANYNLTIPRYSLDGGLYFERDLHLKGTYYIQTLEPRLFYLRVPYYNQTLIPVYDSGFMIFNVDQLFRTNRFSGFDRIGDANQLSYALTTRWLEDESGAEKANFSIGQIKYFSERRVQLCQSPTGFCTDNPDTFGNLSSTFGTSPVASRAVYKFNPAWGITGDYIWDPATRATNNADLNLHYQPARNAIINGGYSYLVNGDVTQVRNNDTENNALHQAILSAAWPLSEKWSGIGAYSYNISKNYSMMSFLGVQYDSCCWAMRILGGRIFRSLNEEFEPQYNNNIYLQILLKGLGSVASSDPSGILNTYIPGYYDPFRRR.

An N-terminal signal peptide occupies residues 1 to 21; the sequence is MAIGITACVLSLINYQGLAYS.

The protein belongs to the LptD family. As to quaternary structure, component of the lipopolysaccharide transport and assembly complex. Interacts with LptE and LptA.

It localises to the cell outer membrane. In terms of biological role, together with LptE, is involved in the assembly of lipopolysaccharide (LPS) at the surface of the outer membrane. This is LPS-assembly protein LptD from Legionella pneumophila subsp. pneumophila (strain Philadelphia 1 / ATCC 33152 / DSM 7513).